The sequence spans 268 residues: Putative esterase/lipase 2 (268 aa).

The active site involves histidine 28. Histidine 96 (charge relay system) is an active-site residue.

The protein belongs to the lipase/esterase LIP3/BchO family.

This is Putative esterase/lipase 2 from Mycoplasma pneumoniae (strain ATCC 29342 / M129 / Subtype 1) (Mycoplasmoides pneumoniae).